Reading from the N-terminus, the 327-residue chain is L-lactate dehydrogenase 1 (327 aa).

NAD(+) contacts are provided by residues V21, D42, K47, Y72, and 86-87 (GA). Residues Q89, R95, and 127 to 130 (NPVD) contribute to the substrate site. Residues 125–127 (AAN) and S150 contribute to the NAD(+) site. 155-158 (DSAR) contacts substrate. Beta-D-fructose 1,6-bisphosphate contacts are provided by R160 and H175. Catalysis depends on H182, which acts as the Proton acceptor. Y227 bears the Phosphotyrosine mark. T236 contributes to the substrate binding site.

The protein belongs to the LDH/MDH superfamily. LDH family. Homotetramer.

It is found in the cytoplasm. The enzyme catalyses (S)-lactate + NAD(+) = pyruvate + NADH + H(+). It functions in the pathway fermentation; pyruvate fermentation to lactate; (S)-lactate from pyruvate: step 1/1. With respect to regulation, allosterically activated by fructose 1,6-bisphosphate (FBP). Catalyzes the conversion of lactate to pyruvate. This chain is L-lactate dehydrogenase 1, found in Enterococcus faecalis (strain ATCC 700802 / V583).